Reading from the N-terminus, the 128-residue chain is uncharacterized protein (128 aa).

The HTH hxlR-type domain maps to 18-116 (CPVETTLDII…WGEKYKDRID (99 aa)).

This is an uncharacterized protein from Bacillus subtilis (strain 168).